A 525-amino-acid polypeptide reads, in one-letter code: DEAD-box ATP-dependent RNA helicase CshA (525 aa).

A Q motif motif is present at residues threonine 2–alanine 30. The region spanning isoleucine 33 to isoleucine 203 is the Helicase ATP-binding domain. Alanine 46–threonine 53 contributes to the ATP binding site. Positions aspartate 151–aspartate 154 match the DEAD box motif. The Helicase C-terminal domain occupies asparagine 214–alanine 374. Residues threonine 428 to alanine 525 form a disordered region. The span at aspartate 458–glycine 503 shows a compositional bias: basic and acidic residues. Residues glutamate 515–alanine 525 show a composition bias toward basic residues.

The protein belongs to the DEAD box helicase family. CshA subfamily. As to quaternary structure, oligomerizes, may be a member of the RNA degradosome.

Its subcellular location is the cytoplasm. The enzyme catalyses ATP + H2O = ADP + phosphate + H(+). Its function is as follows. DEAD-box RNA helicase possibly involved in RNA degradation. Unwinds dsRNA in both 5'- and 3'-directions, has RNA-dependent ATPase activity. This is DEAD-box ATP-dependent RNA helicase CshA from Bacillus cereus (strain ATCC 10987 / NRS 248).